Here is a 199-residue protein sequence, read N- to C-terminus: Peptidyl-tRNA hydrolase (199 aa).

Tyrosine 18 is a tRNA binding site. Residue histidine 23 is the Proton acceptor of the active site. 3 residues coordinate tRNA: tyrosine 72, asparagine 74, and asparagine 120.

It belongs to the PTH family. In terms of assembly, monomer.

It is found in the cytoplasm. It carries out the reaction an N-acyl-L-alpha-aminoacyl-tRNA + H2O = an N-acyl-L-amino acid + a tRNA + H(+). In terms of biological role, hydrolyzes ribosome-free peptidyl-tRNAs (with 1 or more amino acids incorporated), which drop off the ribosome during protein synthesis, or as a result of ribosome stalling. Catalyzes the release of premature peptidyl moieties from peptidyl-tRNA molecules trapped in stalled 50S ribosomal subunits, and thus maintains levels of free tRNAs and 50S ribosomes. The protein is Peptidyl-tRNA hydrolase of Bifidobacterium adolescentis (strain ATCC 15703 / DSM 20083 / NCTC 11814 / E194a).